We begin with the raw amino-acid sequence, 381 residues long: Queuine tRNA-ribosyltransferase (381 aa).

Catalysis depends on D89, which acts as the Proton acceptor. Residues 89-93 (DSGGF), D143, Q187, and G214 each bind substrate. An RNA binding region spans residues 245-251 (GVGKPED). Residue D264 is the Nucleophile of the active site. The tract at residues 269 to 273 (TRNAR) is RNA binding; important for wobble base 34 recognition. Zn(2+) contacts are provided by C302, C304, C307, and H333.

It belongs to the queuine tRNA-ribosyltransferase family. In terms of assembly, homodimer. Within each dimer, one monomer is responsible for RNA recognition and catalysis, while the other monomer binds to the replacement base PreQ1. It depends on Zn(2+) as a cofactor.

It carries out the reaction 7-aminomethyl-7-carbaguanine + guanosine(34) in tRNA = 7-aminomethyl-7-carbaguanosine(34) in tRNA + guanine. The protein operates within tRNA modification; tRNA-queuosine biosynthesis. In terms of biological role, catalyzes the base-exchange of a guanine (G) residue with the queuine precursor 7-aminomethyl-7-deazaguanine (PreQ1) at position 34 (anticodon wobble position) in tRNAs with GU(N) anticodons (tRNA-Asp, -Asn, -His and -Tyr). Catalysis occurs through a double-displacement mechanism. The nucleophile active site attacks the C1' of nucleotide 34 to detach the guanine base from the RNA, forming a covalent enzyme-RNA intermediate. The proton acceptor active site deprotonates the incoming PreQ1, allowing a nucleophilic attack on the C1' of the ribose to form the product. After dissociation, two additional enzymatic reactions on the tRNA convert PreQ1 to queuine (Q), resulting in the hypermodified nucleoside queuosine (7-(((4,5-cis-dihydroxy-2-cyclopenten-1-yl)amino)methyl)-7-deazaguanosine). This Pectobacterium atrosepticum (strain SCRI 1043 / ATCC BAA-672) (Erwinia carotovora subsp. atroseptica) protein is Queuine tRNA-ribosyltransferase.